Consider the following 530-residue polypeptide: Berberine bridge enzyme-like 4 (530 aa).

The signal sequence occupies residues 1-19 (MKGTLSVLCLVLLVSVLEA). A disulfide bridge connects residues cysteine 32 and cysteine 95. Residue asparagine 52 is glycosylated (N-linked (GlcNAc...) asparagine). Residues 73–247 (NYRKLLAIVA…LSWKINLVDV (175 aa)) enclose the FAD-binding PCMH-type domain. The 6-(S-cysteinyl)-8alpha-(pros-histidyl)-FAD (His-Cys) cross-link spans 110–172 (HDYEGLSYMS…QTLAFPAGVC (63 aa)). N-linked (GlcNAc...) asparagine glycans are attached at residues asparagine 257, asparagine 292, asparagine 341, and asparagine 441.

Belongs to the oxygen-dependent FAD-linked oxidoreductase family. Requires FAD as cofactor. Post-translationally, the FAD cofactor is bound via a bicovalent 6-S-cysteinyl, 8alpha-N1-histidyl FAD linkage.

The protein localises to the secreted. The protein resides in the cell wall. Probable flavin-dependent oxidoreductase. The sequence is that of Berberine bridge enzyme-like 4 from Arabidopsis thaliana (Mouse-ear cress).